The sequence spans 475 residues: UDP-N-acetylmuramate--L-alanine ligase (475 aa).

125–131 contributes to the ATP binding site; it reads GTHGKTT.

This sequence belongs to the MurCDEF family.

It localises to the cytoplasm. It carries out the reaction UDP-N-acetyl-alpha-D-muramate + L-alanine + ATP = UDP-N-acetyl-alpha-D-muramoyl-L-alanine + ADP + phosphate + H(+). The protein operates within cell wall biogenesis; peptidoglycan biosynthesis. Cell wall formation. This is UDP-N-acetylmuramate--L-alanine ligase from Haemophilus influenzae (strain 86-028NP).